Here is a 238-residue protein sequence, read N- to C-terminus: 3,4-dihydroxy-2-butanone 4-phosphate synthase (238 aa).

D-ribulose 5-phosphate is bound by residues 26–27, D31, 166–170, and E190; these read RE and RVGQT. E27 contributes to the Mg(2+) binding site.

This sequence belongs to the DHBP synthase family. Homodimer. Mg(2+) is required as a cofactor. The cofactor is Mn(2+).

It catalyses the reaction D-ribulose 5-phosphate = (2S)-2-hydroxy-3-oxobutyl phosphate + formate + H(+). It functions in the pathway cofactor biosynthesis; riboflavin biosynthesis; 2-hydroxy-3-oxobutyl phosphate from D-ribulose 5-phosphate: step 1/1. Its function is as follows. Catalyzes the conversion of D-ribulose 5-phosphate to formate and 3,4-dihydroxy-2-butanone 4-phosphate. The protein is 3,4-dihydroxy-2-butanone 4-phosphate synthase of Archaeoglobus fulgidus (strain ATCC 49558 / DSM 4304 / JCM 9628 / NBRC 100126 / VC-16).